We begin with the raw amino-acid sequence, 169 residues long: Cell division inhibitor SulA (169 aa).

The interval 106–112 is ftsZ binding; the sequence is ALRTGNY. Positions 162-169 are lon protease binding; that stretch reads KIHSNLYH.

Belongs to the SulA family. As to quaternary structure, interacts with FtsZ. Post-translationally, is rapidly cleaved and degraded by the Lon protease once DNA damage is repaired.

In terms of biological role, component of the SOS system and an inhibitor of cell division. Accumulation of SulA causes rapid cessation of cell division and the appearance of long, non-septate filaments. In the presence of GTP, binds a polymerization-competent form of FtsZ in a 1:1 ratio, thus inhibiting FtsZ polymerization and therefore preventing it from participating in the assembly of the Z ring. This mechanism prevents the premature segregation of damaged DNA to daughter cells during cell division. In Escherichia fergusonii (strain ATCC 35469 / DSM 13698 / CCUG 18766 / IAM 14443 / JCM 21226 / LMG 7866 / NBRC 102419 / NCTC 12128 / CDC 0568-73), this protein is Cell division inhibitor SulA.